The chain runs to 140 residues: Myelodysplastic syndrome 2 translocation-associated protein (140 aa).

Highly expressed in peripheral blood leukocytes, spleen, thymus, kidney, pancreas and lung.

The protein is Myelodysplastic syndrome 2 translocation-associated protein (MDS2) of Homo sapiens (Human).